We begin with the raw amino-acid sequence, 535 residues long: Large neutral amino acids transporter small subunit 2 (535 aa).

Over residues 1–17 the composition is skewed to basic and acidic residues; the sequence is MEEGARHRNNTEKKHPG. The interval 1 to 30 is disordered; sequence MEEGARHRNNTEKKHPGGGESDASPEAGSG. Residues 1–44 are Cytoplasmic-facing; the sequence is MEEGARHRNNTEKKHPGGGESDASPEAGSGGGGVALKKEIGLVS. Ser-29 bears the Phosphoserine mark. Residues 45 to 65 form a helical membrane-spanning segment; sequence ACGIIVGNIIGSGIFVSPKGV. Ile-53 is a binding site for L-leucine. Over 66–73 the chain is Extracellular; that stretch reads LENAGSVG. A helical transmembrane segment spans residues 74–95; sequence LALIVWIVTGFITVVGALCYAE. The Cytoplasmic portion of the chain corresponds to 96 to 116; it reads LGVTIPKSGGDYSYVKDIFGG. The chain crosses the membrane as a helical span at residues 117 to 149; the sequence is LAGFLRLWIAVLVIYPTNQAVIALTFSNYVLQP. Residue Asn-134 participates in L-tryptophan binding. The Extracellular segment spans residues 150–157; that stretch reads LFPTCFPP. A helical membrane pass occupies residues 158–178; the sequence is ESGLRLLAAICLLLLTWVNCS. Topologically, residues 179–181 are cytoplasmic; it reads SVR. Residues 182–210 traverse the membrane as a helical segment; sequence WATRVQDIFTAGKLLALALIIIMGIVQIC. The Extracellular segment spans residues 211–230; the sequence is KGEYFWLEPKNAFENFQEPD. Residues 231–252 form a helical membrane-spanning segment; the sequence is IGLVALAFLQGSFAYGGWNFLN. Residue Gly-246 coordinates L-leucine. Over 253 to 265 the chain is Cytoplasmic; it reads YVTEELVDPYKNL. The helical transmembrane segment at 266 to 287 threads the bilayer; that stretch reads PRAIFISIPLVTFVYVFANVAY. The Extracellular segment spans residues 288–312; it reads VTAMSPQELLASNAVAVTFGEKLLG. Residues 313 to 338 traverse the membrane as a helical segment; it reads VMAWIMPISVALSTFGGVNGSLFTSS. The Cytoplasmic portion of the chain corresponds to 339–364; that stretch reads RLFFAGAREGHLPSVLAMIHVKRCTP. A helical membrane pass occupies residues 365-382; sequence IPALLFTCISTLLMLVTS. Residues 383 to 386 are Extracellular-facing; sequence DMYT. A helical membrane pass occupies residues 387-408; it reads LINYVGFINYLFYGVTVAGQIV. Asn-395 is a binding site for L-tryptophan. Residues 409-423 are Cytoplasmic-facing; the sequence is LRWKKPDIPRPIKIN. Transmembrane regions (helical) follow at residues 424–446 and 447–466; these read LLFPIIYLLFWAFLLVFSLWSEP and VVCGIGLAIMLTGVPVYFLG. At 467 to 535 the chain is on the cytoplasmic side; it reads VYWQHKPKCF…DKDVAGQPQP (69 aa). Positions 502–535 are disordered; that stretch reads SGTEEANEDMEEQQQPMYQPTPTKDKDVAGQPQP. The segment covering 514–523 has biased composition (polar residues); the sequence is QQQPMYQPTP.

It belongs to the amino acid-polyamine-organocation (APC) superfamily. L-type amino acid transporter (LAT) (TC 2.A.3.8) family. In terms of assembly, disulfide-linked heterodimer composed of the catalytic light chain subunit SLC7A8 and the heavy chain subunit SLC3A2. SLC3A2 acts as chaperones for correct plasma membrane trafficking and stabilization of SLC7A8 and modulates the substrate affinity and specificity of SLC7A8. ICAM-1 associates with the heterodimer SLC3A2/SLC7A8; this interaction regulates SLC7A8 activity. Strongest expression is observed in kidney and moderate expression in placenta and brain, followed by liver, prostate, testis, ovary, lymph node, thymus, spleen, skeletal muscle and heart. Also expressed in fetal liver as well as in the retinal pigment epithelial cell line ARPE-19 and the intestinal epithelial cell line Caco-2.

It is found in the cell membrane. The protein localises to the basolateral cell membrane. The catalysed reaction is L-histidine(in) + L-phenylalanine(out) = L-histidine(out) + L-phenylalanine(in). It catalyses the reaction L-tryptophan(in) + L-phenylalanine(out) = L-tryptophan(out) + L-phenylalanine(in). It carries out the reaction L-isoleucine(in) + L-phenylalanine(out) = L-isoleucine(out) + L-phenylalanine(in). The enzyme catalyses L-valine(in) + L-phenylalanine(out) = L-valine(out) + L-phenylalanine(in). The catalysed reaction is L-leucine(in) + L-phenylalanine(out) = L-leucine(out) + L-phenylalanine(in). It catalyses the reaction L-glutamine(in) + L-phenylalanine(out) = L-glutamine(out) + L-phenylalanine(in). It carries out the reaction L-cysteine(in) + L-phenylalanine(out) = L-cysteine(out) + L-phenylalanine(in). The enzyme catalyses L-phenylalanine(out) + L-methionine(in) = L-phenylalanine(in) + L-methionine(out). The catalysed reaction is L-leucine(out) + L-methionine(in) = L-leucine(in) + L-methionine(out). It catalyses the reaction L-cysteine(out) + L-methionine(in) = L-cysteine(in) + L-methionine(out). It carries out the reaction S-methylmercury-L-cysteine(out) + L-methionine(in) = S-methylmercury-L-cysteine(in) + L-methionine(out). The enzyme catalyses S-methylmercury-L-cysteine(in) + L-leucine(out) = S-methylmercury-L-cysteine(out) + L-leucine(in). The catalysed reaction is S-methylmercury-L-cysteine(in) + L-phenylalanine(out) = S-methylmercury-L-cysteine(out) + L-phenylalanine(in). It catalyses the reaction L-phenylalanine(out) + L-serine(in) = L-phenylalanine(in) + L-serine(out). It carries out the reaction L-phenylalanine(out) + glycine(in) = L-phenylalanine(in) + glycine(out). The enzyme catalyses L-phenylalanine(out) + L-alanine(in) = L-phenylalanine(in) + L-alanine(out). The catalysed reaction is 3,3'-diiodo-L-thyronine(out) = 3,3'-diiodo-L-thyronine(in). It catalyses the reaction 3,3',5-triiodo-L-thyronine(out) = 3,3',5-triiodo-L-thyronine(in). It carries out the reaction L-dopa(out) + L-phenylalanine(in) = L-dopa(in) + L-phenylalanine(out). With respect to regulation, inhibited by the L-type inhibitor 2-Aminobicyclo-(2,2,1)-heptane-2-carboxylic acid (BCH). Its function is as follows. Associates with SLC3A2 to form a functional heterodimeric complex that translocates small and large neutral amino acids with broad specificity and a stoichiometry of 1:1. Functions as amino acid antiporter mediating the influx of extracellular essential amino acids mainly in exchange with the efflux of highly concentrated intracellular amino acids. Has relatively symmetrical selectivities but strongly asymmetrical substrate affinities at both the intracellular and extracellular sides of the transporter. This asymmetry allows SLC7A8 to regulate intracellular amino acid pools (mM concentrations) by exchange with external amino acids (uM concentration range), equilibrating the relative concentrations of different amino acids across the plasma membrane instead of mediating their net uptake. May play an essential role in the reabsorption of neutral amino acids from the epithelial cells to the bloodstream in the kidney. Involved in the uptake of methylmercury (MeHg) when administered as the L-cysteine or D,L-homocysteine complexes, and hence plays a role in metal ion homeostasis and toxicity. Involved in the cellular activity of small molecular weight nitrosothiols, via the stereoselective transport of L-nitrosocysteine (L-CNSO) across the transmembrane. Imports the thyroid hormone diiodothyronine (T2) and to a smaller extent triiodothyronine (T3) but not rT 3 or thyroxine (T4). Mediates the uptake of L-DOPA. May participate in auditory function. The polypeptide is Large neutral amino acids transporter small subunit 2 (Homo sapiens (Human)).